The chain runs to 1113 residues: MFSQVPRTPASGCYYLNSMTPEGQEMYLRFDQTTRRSPYRMSRILARHQLVTKIQQEIEAKEACDWLRAAGFPQYAQLYEDSQFPINIVAVKNDHDFLEKDLVEPLCRRLNTLNKCASMKLDVNFQRKKGDDSDEEDLCISNKWTFQRTSRRWSRVDDLYTLLPRGDRNGSPGGTGMRNTTSSESVLTDLSEPEVCSIHSESSGGSDSRSQPGQCCTDNPVMLDAPLVSSSLPQPPRDVLNHPFHPKNEKPTRARAKSFLKRMETLRGKGAHGRHKGSGRTGGLVISGPMLQQEPESFKAMQCIQIPNGDLQNSPPPACRKGLPCSGKSSGESSPSEHSSSGVSTPCLKERKCHEANKRGGMYLEDLDVLAGTALPDAGDQSRMHEFHSQENLVVHIPKDHKPGTFPKALSIESLSPTDSSNGVNWRTGSISLGREQVPGAREPRLMASCHRASRVSIYDNVPGSHLYASTGDLLDLEKDDLFPHLDDILQHVNGLQEVVDDWSKDVLPELQTHDTLVGEPGLSTFPSPNQITLDFEGNSVSEGRTTPSDVERDVTSLNESEPPGVRDRRDSGVGASLTRPNRRLRWNSFQLSHQPRPAPASPHISSQTASQLSLLQRFSLLRLTAIMEKHSMSNKHGWTWSVPKFMKRMKVPDYKDKAVFGVPLIVHVQRTGQPLPQSIQQALRYLRSNCLDQVGLFRKSGVKSRIHALRQMNENFPENVNYEDQSAYDVADMVKQFFRDLPEPLFTNKLSETFLHIYQYVSKEQRLQAVQAAILLLADENREVLQTLLCFLNDVVNLVEENQMTPMNLAVCLAPSLFHLNLLKKESSPRVIQKKYATGKPDQKDLNENLAAAQGLAHMIMECDRLFEVPHELVAQSRNSYVEAEIHVPTLEELGTQLEESGATFHTYLNHLIQGLQKEAKEKFKGWVTCSSTDNTDLAFKKVGDGNPLKLWKASVEVEAPPSVVLNRVLRERHLWDEDFVQWKVVETLDRQTEIYQYVLNSMAPHPSRDFVVLRTWKTDLPKGMCTLVSLSVEHEEAQLLGGVRAVVMDSQYLIEPCGSGKSRLTHICRIDLKGHSPEWYSKGFGHLCAAEVARIRNSFQPLIAEGPETKI.

Position 1 is an N-acetylmethionine (methionine 1). Residues 55–122 (QQEIEAKEAC…LNKCASMKLD (68 aa)) enclose the SAM domain. 2 disordered regions span residues 162–254 (LLPR…PTRA) and 307–346 (PNGD…VSTP). The segment covering 177–188 (MRNTTSSESVLT) has biased composition (polar residues). Low complexity-rich tracts occupy residues 197–213 (SIHS…SQPG) and 326–344 (SGKS…SGVS). At serine 411 the chain carries Phosphoserine. Polar residues predominate over residues 536–549 (FEGNSVSEGRTTPS). The segment at 536 to 580 (FEGNSVSEGRTTPSDVERDVTSLNESEPPGVRDRRDSGVGASLTR) is disordered. The Rho-GAP domain occupies 663–868 (VPLIVHVQRT…HMIMECDRLF (206 aa)). Residues 899–1107 (LEESGATFHT…RNSFQPLIAE (209 aa)) enclose the START domain.

As to quaternary structure, homodimer. Interacts with TAX1BP1. Ubiquitously expressed. Underexpressed in hepatocellular carcinoma cells and some breast cancer cell lines.

It is found in the cytoplasm. Its subcellular location is the membrane. The protein localises to the mitochondrion membrane. It localises to the lipid droplet. In terms of biological role, GTPase-activating protein for RhoA, and perhaps for Cdc42. May be involved in regulation of cytoskeletal reorganization, cell proliferation and cell motility. Acts a tumor suppressor in hepatocellular carcinoma cells. This is StAR-related lipid transfer protein 13 (STARD13) from Homo sapiens (Human).